The following is a 393-amino-acid chain: MTVPATKKDLMIINMGPHHPSMHGVLRLIVTLDGEDVIDCEPILGYLHRGMEKIAENRTIIQYLPYVTRWDYLATMFTEAITVNAPEQLGNIQVPKRASYIRVIMLELSRIASHLLWLGPFMADIGAQTPFFYIFRERELLYDLFEAATGMRMMHNYFRIGGVAADLPHGWIDKCLDFCDYSLTGVVEYQKLITRNPIFLERVEEVGIIGGEEAINWGLSGPMLRASGIQWDLRKVDHYECYDEFDWEVQWQKEGDSLARYLVRISEMTESIKILQQALEGIPGGPYENLEVRRFDRAKDSEWNDFEYRFISKKPSPTFELLKQELYVRVEAPKGELGIFLIGDNSVFPWRWKIRPPGFINLQILPQLVKRMKLADIMTILGSIDIIMGEVDR.

Belongs to the complex I 49 kDa subunit family. In terms of assembly, NDH is composed of at least 16 different subunits, 5 of which are encoded in the nucleus.

It localises to the plastid. The protein localises to the chloroplast thylakoid membrane. It catalyses the reaction a plastoquinone + NADH + (n+1) H(+)(in) = a plastoquinol + NAD(+) + n H(+)(out). The catalysed reaction is a plastoquinone + NADPH + (n+1) H(+)(in) = a plastoquinol + NADP(+) + n H(+)(out). NDH shuttles electrons from NAD(P)H:plastoquinone, via FMN and iron-sulfur (Fe-S) centers, to quinones in the photosynthetic chain and possibly in a chloroplast respiratory chain. The immediate electron acceptor for the enzyme in this species is believed to be plastoquinone. Couples the redox reaction to proton translocation, and thus conserves the redox energy in a proton gradient. This chain is NAD(P)H-quinone oxidoreductase subunit H, chloroplastic, found in Drimys granadensis.